We begin with the raw amino-acid sequence, 339 residues long: Phenylalanine--tRNA ligase alpha subunit (339 aa).

A Mg(2+)-binding site is contributed by glutamate 254.

The protein belongs to the class-II aminoacyl-tRNA synthetase family. Phe-tRNA synthetase alpha subunit type 1 subfamily. As to quaternary structure, tetramer of two alpha and two beta subunits. Mg(2+) serves as cofactor.

It is found in the cytoplasm. It carries out the reaction tRNA(Phe) + L-phenylalanine + ATP = L-phenylalanyl-tRNA(Phe) + AMP + diphosphate + H(+). This chain is Phenylalanine--tRNA ligase alpha subunit, found in Dictyoglomus turgidum (strain DSM 6724 / Z-1310).